A 620-amino-acid chain; its full sequence is Glutathione-regulated potassium-efflux system protein KefC (620 aa).

A run of 12 helical transmembrane segments spans residues 4 to 24, 26 to 46, 54 to 74, 90 to 110, 114 to 134, 149 to 169, 178 to 198, 218 to 238, 270 to 290, 294 to 314, 327 to 347, and 359 to 379; these read HTLI…PIAV, LGLG…PWGL, SILH…GLEL, GALQ…LLGL, VAEL…MQAM, FAVL…IPLL, MGAF…VVLL, VFSA…EEVG, GLLL…GTLI, LRIV…LWLI, WFAV…GAAQ, and SLTL…VILN. The RCK N-terminal domain occupies 399–518; sequence QPRVIIAGFG…AGVEKPERET (120 aa). The disordered stretch occupies residues 597–620; sequence GWQGTEEGKHTGNMADEPETKPSS.

This sequence belongs to the monovalent cation:proton antiporter 2 (CPA2) transporter (TC 2.A.37) family. KefC subfamily. In terms of assembly, homodimer. Interacts with the regulatory subunit KefF.

Its subcellular location is the cell inner membrane. In terms of biological role, pore-forming subunit of a potassium efflux system that confers protection against electrophiles. Catalyzes K(+)/H(+) antiport. The sequence is that of Glutathione-regulated potassium-efflux system protein KefC from Escherichia coli O17:K52:H18 (strain UMN026 / ExPEC).